A 251-amino-acid chain; its full sequence is Triosephosphate isomerase (251 aa).

Substrate is bound at residue 9–11; sequence NWK. Histidine 95 (electrophile) is an active-site residue. The active-site Proton acceptor is the glutamate 167. Substrate contacts are provided by residues glycine 173, serine 213, and 234–235; that span reads GG.

Belongs to the triosephosphate isomerase family. As to quaternary structure, homodimer.

It localises to the cytoplasm. The catalysed reaction is D-glyceraldehyde 3-phosphate = dihydroxyacetone phosphate. It functions in the pathway carbohydrate biosynthesis; gluconeogenesis. Its pathway is carbohydrate degradation; glycolysis; D-glyceraldehyde 3-phosphate from glycerone phosphate: step 1/1. Functionally, involved in the gluconeogenesis. Catalyzes stereospecifically the conversion of dihydroxyacetone phosphate (DHAP) to D-glyceraldehyde-3-phosphate (G3P). This is Triosephosphate isomerase from Lactobacillus gasseri (strain ATCC 33323 / DSM 20243 / BCRC 14619 / CIP 102991 / JCM 1131 / KCTC 3163 / NCIMB 11718 / NCTC 13722 / AM63).